The following is a 192-amino-acid chain: UPF0301 protein Bphyt_0868 (192 aa).

This sequence belongs to the UPF0301 (AlgH) family.

The chain is UPF0301 protein Bphyt_0868 from Paraburkholderia phytofirmans (strain DSM 17436 / LMG 22146 / PsJN) (Burkholderia phytofirmans).